A 428-amino-acid polypeptide reads, in one-letter code: BTB/POZ domain-containing protein KCTD16 (428 aa).

The BTB domain maps to 25–98 (EVVELNVGGQ…LRDRQVVLPD (74 aa)). Phosphotyrosine is present on Tyr-112. Phosphoserine is present on residues Ser-130, Ser-137, Ser-143, and Ser-146.

In terms of assembly, homopentamer; forms an open pentamer. In contrast to other BTB domain-containing proteins, does not interact with CUL3. Interacts as a tetramer with GABRB1 and GABRB2.

The protein localises to the presynaptic cell membrane. The protein resides in the postsynaptic cell membrane. Auxiliary subunit of GABA-B receptors that determine the pharmacology and kinetics of the receptor response. Increases agonist potency and markedly alter the G-protein signaling of the receptors by accelerating onset and promoting desensitization. The protein is BTB/POZ domain-containing protein KCTD16 (KCTD16) of Homo sapiens (Human).